The chain runs to 149 residues: Calmodulin-1 (149 aa).

The residue at position 2 (alanine 2) is an N-acetylalanine. 4 consecutive EF-hand domains span residues 8 to 43 (DQIS…LGQN), 44 to 79 (PTEA…KMKD), 81 to 116 (DSEE…LGEK), and 117 to 149 (LTDE…MMAK). Residues aspartate 21, aspartate 23, aspartate 25, cysteine 27, glutamate 32, aspartate 57, aspartate 59, asparagine 61, threonine 63, glutamate 68, aspartate 94, aspartate 96, asparagine 98, and glutamate 105 each contribute to the Ca(2+) site. Lysine 116 carries the N6,N6,N6-trimethyllysine modification. The Ca(2+) site is built by aspartate 130, aspartate 132, aspartate 134, glutamine 136, and glutamate 141.

Belongs to the calmodulin family.

Functionally, calmodulin mediates the control of a large number of enzymes, ion channels and other proteins by Ca(2+). Among the enzymes to be stimulated by the calmodulin-Ca(2+) complex are a number of protein kinases and phosphatases. The protein is Calmodulin-1 (CAM81) of Petunia hybrida (Petunia).